The chain runs to 395 residues: Zinc finger protein 200 (395 aa).

The segment at 157-208 is disordered; it reads VNGSNPEGEDPEREPVENEDYREKSSDDDEMDSSLVSQQPPDNQEKERLNTS. Positions 169-181 are enriched in basic and acidic residues; that stretch reads REPVENEDYREKS. An interaction with PRMT3 region spans residues 246-395; that stretch reads RRTRRWYTCP…HSACKTRKQK (150 aa). 5 consecutive C2H2-type zinc fingers follow at residues 252–274, 280–302, 308–330, 336–358, and 364–386; these read YTCP…QRTH, YDCN…ERIH, YSCS…EGIH, FKCP…LQSH, and YGCK…EKTH.

In terms of assembly, interacts (via C-terminus) with PRMT3 (via zinc-finger); the interaction is direct and required to localize protein arginine N-methyltransferase PRMT3 to the nucleus and inhibit its proteasomal degradation. In terms of tissue distribution, highly expressed in testis, weakly expressed in spleen, thymus, prostate, ovary, small intestine colon and peripheral blood leukocytes.

It localises to the nucleus. Functionally, localizes protein arginine N-methyltransferase PRMT3 to the nucleus. This chain is Zinc finger protein 200 (ZNF200), found in Homo sapiens (Human).